A 163-amino-acid polypeptide reads, in one-letter code: Large ribosomal subunit protein uL15 (163 aa).

The protein belongs to the universal ribosomal protein uL15 family. In terms of assembly, part of the 50S ribosomal subunit.

In terms of biological role, binds to the 23S rRNA. This is Large ribosomal subunit protein uL15 from Orientia tsutsugamushi (strain Boryong) (Rickettsia tsutsugamushi).